The chain runs to 309 residues: MTTRWLEITCDIPADLADILASYLGELSGTGVCTENLDVDAFSTDEITLSAIKTVKAYFSEDEDVDARLEEIQNFLDRLAEQHPGLSIPRPIISTVQSEDWSSSWKANFKPLRVGRRLMIVPTWEEPPPYPDDIVLRLDPGMAFGTGGHETTRLCLELLEEIMDGMPILLTPAVLDLGTGSGILAMAAVRLGAGRVVAVDIDPQAVEVARENLALNDLTDQVECDTTPLEALPGTFDVILANILAEELVRLAPQLIQRLSVGGMLVLSGILAEREQLVRAGFACQELEYRETRRQGEWVAMVYRRAARA.

S-adenosyl-L-methionine is bound by residues threonine 152, glycine 178, aspartate 200, and asparagine 242.

The protein belongs to the methyltransferase superfamily. PrmA family.

It is found in the cytoplasm. It carries out the reaction L-lysyl-[protein] + 3 S-adenosyl-L-methionine = N(6),N(6),N(6)-trimethyl-L-lysyl-[protein] + 3 S-adenosyl-L-homocysteine + 3 H(+). Its function is as follows. Methylates ribosomal protein L11. The polypeptide is Ribosomal protein L11 methyltransferase (Pelobacter propionicus (strain DSM 2379 / NBRC 103807 / OttBd1)).